The primary structure comprises 79 residues: UPF0180 protein BCB4264_A1446 (79 aa).

This sequence belongs to the UPF0180 family.

This Bacillus cereus (strain B4264) protein is UPF0180 protein BCB4264_A1446.